Consider the following 179-residue polypeptide: Large ribosomal subunit protein uL6 (179 aa).

It belongs to the universal ribosomal protein uL6 family. In terms of assembly, part of the 50S ribosomal subunit.

Functionally, this protein binds to the 23S rRNA, and is important in its secondary structure. It is located near the subunit interface in the base of the L7/L12 stalk, and near the tRNA binding site of the peptidyltransferase center. This is Large ribosomal subunit protein uL6 from Prochlorococcus marinus (strain NATL2A).